Here is a 323-residue protein sequence, read N- to C-terminus: Aldo-keto reductase family 1 member C4 (323 aa).

Residues Gly-20–Tyr-24 and Asp-50 contribute to the NADP(+) site. Tyr-55 serves as the catalytic Proton donor. Substrate is bound at residue His-117. Residues Ser-166 to Asn-167, Gln-190, His-216 to Thr-221, and Lys-270 to Asn-280 each bind NADP(+).

It belongs to the aldo/keto reductase family. In terms of assembly, monomer. As to expression, high expression in liver. Also expressed in kidney.

It is found in the cytoplasm. The protein localises to the cytosol. The catalysed reaction is chlordecone alcohol + NADP(+) = chlordecone + NADPH + H(+). It catalyses the reaction a 3alpha-hydroxysteroid + NADP(+) = a 3-oxosteroid + NADPH + H(+). The enzyme catalyses a 3alpha-hydroxysteroid + NAD(+) = a 3-oxosteroid + NADH + H(+). It carries out the reaction 5alpha-androstane-3alpha,17beta-diol + NADP(+) = 17beta-hydroxy-5alpha-androstan-3-one + NADPH + H(+). The catalysed reaction is 5alpha-androstane-3beta,17beta-diol + NADP(+) = 17beta-hydroxy-5alpha-androstan-3-one + NADPH + H(+). It catalyses the reaction 5alpha-androstane-3alpha,17beta-diol + NAD(+) = 17beta-hydroxy-5alpha-androstan-3-one + NADH + H(+). The enzyme catalyses 17beta-estradiol + NADP(+) = estrone + NADPH + H(+). It carries out the reaction 17beta-estradiol + NAD(+) = estrone + NADH + H(+). The catalysed reaction is (20S)-hydroxypregn-4-en-3-one + NADP(+) = progesterone + NADPH + H(+). It catalyses the reaction (20S)-hydroxypregn-4-en-3-one + NAD(+) = progesterone + NADH + H(+). The enzyme catalyses androsterone + NADP(+) = 5alpha-androstan-3,17-dione + NADPH + H(+). It carries out the reaction testosterone + NADP(+) = androst-4-ene-3,17-dione + NADPH + H(+). The catalysed reaction is testosterone + NAD(+) = androst-4-ene-3,17-dione + NADH + H(+). It catalyses the reaction 3alpha-hydroxy-5alpha-androstane 17-O-(beta-D-glucuronate) + NADP(+) = 5alpha-dihydrotestosterone 17-O-(beta-D-glucuronate) + NADPH + H(+). The enzyme catalyses (3beta,5alpha,17beta)-3-hydroxy-androstan-17-yl sulfate + NADP(+) = 5alpha-dihydrotestosterone sulfate + NADPH + H(+). It carries out the reaction 5alpha-androstane-3alpha,17beta-diol + NAD(+) = androsterone + NADH + H(+). The protein operates within steroid metabolism. Potently inhibited by benzbromarone, 3',3'',5',5''-tetrabromophenolphthalein (TBPP) and o-cresolphthalein. Functionally, cytosolic aldo-keto reductase that catalyzes the NADH and NADPH-dependent reduction of ketosteroids to hydroxysteroids. Liver specific enzyme that acts as an NAD(P)(H)-dependent 3-, 17- and 20-ketosteroid reductase on the steroid nucleus and side chain. Displays the ability to catalyze both oxidation and reduction in vitro, but most probably acts as a reductase in vivo since the oxidase activity measured in vitro is inhibited by physiological concentration of NADPH. Acts preferentially as a 3-alpha-hydroxysteroid dehydrogenase (HSD) with a subsidiary 3-beta-HSD activity. Catalyzes efficiently the transformation of the potent androgen 5-alpha-dihydrotestosterone (5alpha-DHT or 17beta-hydroxy-5alpha-androstan-3-one) into the less active form, 5-alpha-androstan-3-alpha,17-beta-diol (3-alpha-diol). Catalyzes the reduction of estrone into 17beta-estradiol but with low efficiency. Metabolizes a broad spectrum of natural and synthetic therapeutic steroid and plays an important role in metabolism of androgens, estrogens, progestereone and conjugated steroids. Catalyzes the biotransformation of the pesticide chlordecone (kepone) to its corresponding alcohol leading to increased biliary excretion of the pesticide and concomitant reduction of its neurotoxicity since bile is the major excretory route. This Macaca fuscata fuscata (Japanese macaque) protein is Aldo-keto reductase family 1 member C4 (AKR1C4).